The following is a 238-amino-acid chain: Protein odd-skipped-related 2 (238 aa).

The disordered stretch occupies residues 105 to 126 (EDPPVTGQSRLSPERRPARGRL). C2H2-type zinc fingers lie at residues 134 to 156 (FICR…ERTH), 162 to 184 (YTCD…RYIH), and 190 to 212 (FKCQ…KTLH).

It belongs to the Odd C2H2-type zinc-finger protein family. In terms of tissue distribution, at the 8-somite stage, expressed in the pronephros, with weak generalized expression elsewhere. At 24 hpf, expressed in the kidney tubules and the anterior duct, and also in the gut. At 60 hpf, expressed in the tubules and the pectoral fin buds.

Its subcellular location is the nucleus. Functionally, transcriptional repressor. Required for pronephric kidney development. This chain is Protein odd-skipped-related 2, found in Danio rerio (Zebrafish).